The chain runs to 310 residues: ADP-L-glycero-D-manno-heptose-6-epimerase (310 aa).

NADP(+) is bound by residues 10–11 (FI), 31–32 (DN), K38, K53, 75–79 (EGACS), and N92. The Proton acceptor role is filled by Y140. K144 contributes to the NADP(+) binding site. N169 contacts substrate. Positions 170 and 178 each coordinate NADP(+). The active-site Proton acceptor is K178. Residues S180, H187, 201-204 (FEGS), and R209 each bind substrate. Position 267 is an N6-acetyllysine (K267). Y272 contacts substrate.

It belongs to the NAD(P)-dependent epimerase/dehydratase family. HldD subfamily. Homopentamer. NADP(+) serves as cofactor.

It catalyses the reaction ADP-D-glycero-beta-D-manno-heptose = ADP-L-glycero-beta-D-manno-heptose. It participates in nucleotide-sugar biosynthesis; ADP-L-glycero-beta-D-manno-heptose biosynthesis; ADP-L-glycero-beta-D-manno-heptose from D-glycero-beta-D-manno-heptose 7-phosphate: step 4/4. In terms of biological role, catalyzes the interconversion between ADP-D-glycero-beta-D-manno-heptose and ADP-L-glycero-beta-D-manno-heptose via an epimerization at carbon 6 of the heptose. The protein is ADP-L-glycero-D-manno-heptose-6-epimerase of Escherichia coli (strain SMS-3-5 / SECEC).